The primary structure comprises 313 residues: Intelectin-like protein (313 aa).

One can recognise a Fibrinogen C-terminal domain in the interval 33 to 251; sequence TSCCSQTSPG…NNEKAPMALC (219 aa). Ca(2+)-binding residues include His-86, Glu-87, Asn-89, Gly-92, Gly-97, Asp-98, and Asp-133. Intrachain disulfides connect Cys-94/Cys-280, Cys-199/Cys-259, and Cys-251/Cys-265. The Ca(2+) site is built by Asn-260, Glu-262, Glu-274, and Asp-282. A carbohydrate-binding positions include 262–263 and Glu-274; that span reads EH.

As to quaternary structure, monomer, homodimer, homotrimer and homotetramer. Mostly monomeric or dimeric.

It localises to the secreted. In terms of biological role, binds mannan, mannose and, to a lesser degree, D-lactose, N-acetylgalactosamine, N-acetylglucosamine and beta-D-glucose. The polypeptide is Intelectin-like protein (Alligator mississippiensis (American alligator)).